We begin with the raw amino-acid sequence, 357 residues long: Homoserine O-acetyltransferase (357 aa).

Positions 51 to 340 (NVIVICHALT…EPYGHDAFLI (290 aa)) constitute an AB hydrolase-1 domain. Ser-147 acts as the Nucleophile in catalysis. Arg-216 provides a ligand contact to substrate. Active-site residues include Asp-306 and His-335. Asp-336 provides a ligand contact to substrate.

Belongs to the AB hydrolase superfamily. MetX family. In terms of assembly, homodimer.

Its subcellular location is the cytoplasm. The enzyme catalyses L-homoserine + acetyl-CoA = O-acetyl-L-homoserine + CoA. It participates in amino-acid biosynthesis; L-methionine biosynthesis via de novo pathway; O-acetyl-L-homoserine from L-homoserine: step 1/1. Its function is as follows. Transfers an acetyl group from acetyl-CoA to L-homoserine, forming acetyl-L-homoserine. The chain is Homoserine O-acetyltransferase from Chlorobium chlorochromatii (strain CaD3).